The following is a 385-amino-acid chain: 8-amino-7-oxononanoate synthase (385 aa).

Arginine 21 serves as a coordination point for substrate. Position 108–109 (108–109 (GF)) interacts with pyridoxal 5'-phosphate. Residue histidine 133 participates in substrate binding. Pyridoxal 5'-phosphate-binding residues include serine 179, histidine 207, and threonine 233. Lysine 236 carries the post-translational modification N6-(pyridoxal phosphate)lysine. Threonine 352 contacts substrate.

The protein belongs to the class-II pyridoxal-phosphate-dependent aminotransferase family. BioF subfamily. As to quaternary structure, homodimer. It depends on pyridoxal 5'-phosphate as a cofactor.

It carries out the reaction 6-carboxyhexanoyl-[ACP] + L-alanine + H(+) = (8S)-8-amino-7-oxononanoate + holo-[ACP] + CO2. The protein operates within cofactor biosynthesis; biotin biosynthesis. In terms of biological role, catalyzes the decarboxylative condensation of pimeloyl-[acyl-carrier protein] and L-alanine to produce 8-amino-7-oxononanoate (AON), [acyl-carrier protein], and carbon dioxide. This chain is 8-amino-7-oxononanoate synthase, found in Salmonella choleraesuis (strain SC-B67).